Reading from the N-terminus, the 387-residue chain is Gamma-butyrobetaine dioxygenase (387 aa).

Positions 38, 40, 43, and 82 each coordinate Zn(2+). Fe cation contacts are provided by His202, Asp204, and His347. Ser351 is modified (phosphoserine).

It belongs to the gamma-BBH/TMLD family. It depends on Fe(2+) as a cofactor. Requires L-ascorbate as cofactor. Expressed in the liver and in some extend in the testis and the epididymis.

The protein resides in the cytoplasm. It catalyses the reaction 4-(trimethylamino)butanoate + 2-oxoglutarate + O2 = carnitine + succinate + CO2. The protein operates within amine and polyamine biosynthesis; carnitine biosynthesis. Functionally, catalyzes the formation of L-carnitine from gamma-butyrobetaine. The protein is Gamma-butyrobetaine dioxygenase (Bbox1) of Rattus norvegicus (Rat).